The sequence spans 107 residues: Immunoglobulin kappa constant (107 aa).

The 98-residue stretch at 6–103 (PTVSIFPPSS…STSPIVKSFN (98 aa)) folds into the Ig-like domain. A disulfide bond links Cys27 and Cys87.

The polypeptide is Immunoglobulin kappa constant (Mus musculus (Mouse)).